A 98-amino-acid chain; its full sequence is Glutaredoxin 1 (98 aa).

In terms of domain architecture, Glutaredoxin spans methionine 1 to aspartate 98. A disulfide bridge connects residues cysteine 17 and cysteine 20.

This sequence belongs to the glutaredoxin family. As to quaternary structure, monomer.

It localises to the cytoplasm. In terms of biological role, has a glutathione-disulfide oxidoreductase activity in the presence of NADPH and glutathione reductase. Reduces low molecular weight disulfides and proteins. The sequence is that of Glutaredoxin 1 (grxC1) from Rickettsia bellii (strain RML369-C).